Reading from the N-terminus, the 580-residue chain is MESQCDYSMYFPAVPLPPRAELAGDPGRYRALPRRNHLYLGETVRFLLVLRCRGGAGSGTGGGPGLGSRGAWAELATALAALASVSAGGGMPGGGGAGDQDSEPPGGGDPGGGGLFRGCSPLLTHGPGPATSGGATTLPVEEPIVSTDEVIFPLTVSLDRLPPGTPKAKIVVTVWKREIEAPEVRDQGYLRLLQTRSPGETFRGEQSAFKAQVSTLLTLLPPPVLRCRQFTVAGKHLTVLKVLNSSSQEEISIWDIRILPNFNASYLPVMPDGSVLLVDNVCHQSGEVSMGSFCRLPGTSGCFPCPLNALEEHNFLFQLRGGEQPPPGAKEGLEVPLIAVVQWSTPKLPFTQSIYTHYRLPSVRLDRPCFVMTASCKSPVRTYERFTVTYTLLNNLQDFLAVRLVWTPEHAQAGKQLCEEERRAMQAALDSVVCHTPLNNLGFSRKGSALTFSVAFQALRTGLFELSQHMKLKLQFTASVSHPPPEARPLSRKSSPSSPAVRDLVERHQASLGRSQSFSHQQPSRSHLMRSGSVMERRAITPPVASPVGRPLYLPPDKAVLSLDKIAKRECKVLVVEPVK.

2 disordered regions span residues Gly-90–Leu-138 and Val-480–Ser-533. The span at Pro-105–Phe-116 shows a compositional bias: gly residues. Residues Thr-124–Thr-137 are compositionally biased toward low complexity. Ser-491 carries the phosphoserine modification. The span at Arg-492–Arg-502 shows a compositional bias: low complexity. A compositionally biased stretch (polar residues) spans Leu-512–Arg-525. Phosphoserine is present on Ser-517. Thr-541 is modified (phosphothreonine). Ser-546 is subject to Phosphoserine.

As to quaternary structure, component of the multisubunit TRAPP II complex, which includes at least TRAPPC1, TRAPPC2, TRAPPC2L, TRAPPC3, TRAPPC4, TRAPPC5, TRAPPC6A/B, TRAPPC9, TRAPPC10 and TRAPPC14. TRAPPC9, TRAPPC10 and TRAPPC14 are specific subunits of the TRAPP II complex. Interacts with alpha-tubulin during mitosis. Interacts with RAB3IP (via the N-terminal region); this interaction mediates RAB3IP association with the TRAPP II complex. Interacts with TRAPPC10. Interacts with FBF1. Broadly expressed. High levels in brain, cerebellum, testis and whole blood.

It localises to the cytoplasm. The protein localises to the cytoskeleton. The protein resides in the spindle. It is found in the vesicle. Its subcellular location is the midbody. Its function is as follows. Specific subunit of the TRAPP (transport protein particle) II complex, a highly conserved vesicle tethering complex that functions in late Golgi trafficking as a membrane tether. TRAPP II complex also has GEF activity toward RAB1A. TRAPPC14 is dispensable for TRAPPII complex integrity but mediates RAB3IP preciliary vesicle trafficking to the mother centriole during ciliogenesis. Modulates YAP1 activity as transcriptional regulator. The protein is Trafficking protein particle complex subunit 14 of Homo sapiens (Human).